The sequence spans 160 residues: Cytochrome b6-f complex subunit 4 (160 aa).

Transmembrane regions (helical) follow at residues L36 to V56, L95 to E115, and T131 to I151.

It belongs to the cytochrome b family. PetD subfamily. The 4 large subunits of the cytochrome b6-f complex are cytochrome b6, subunit IV (17 kDa polypeptide, petD), cytochrome f and the Rieske protein, while the 4 small subunits are petG, petL, petM and petN. The complex functions as a dimer.

The protein resides in the plastid. It is found in the chloroplast thylakoid membrane. In terms of biological role, component of the cytochrome b6-f complex, which mediates electron transfer between photosystem II (PSII) and photosystem I (PSI), cyclic electron flow around PSI, and state transitions. The protein is Cytochrome b6-f complex subunit 4 of Arabidopsis thaliana (Mouse-ear cress).